The primary structure comprises 306 residues: Curved DNA-binding protein (306 aa).

Residues 5–69 form the J domain; it reads DYYAIMGVKP…QRRAEYDQLW (65 aa).

The protein localises to the cytoplasm. It localises to the nucleoid. Its function is as follows. DNA-binding protein that preferentially recognizes a curved DNA sequence. It is probably a functional analog of DnaJ; displays overlapping activities with DnaJ, but functions under different conditions, probably acting as a molecular chaperone in an adaptive response to environmental stresses other than heat shock. Lacks autonomous chaperone activity; binds native substrates and targets them for recognition by DnaK. Its activity is inhibited by the binding of CbpM. In Citrobacter koseri (strain ATCC BAA-895 / CDC 4225-83 / SGSC4696), this protein is Curved DNA-binding protein.